The primary structure comprises 103 residues: Flagellar hook-basal body complex protein FliE (103 aa).

This sequence belongs to the FliE family.

It is found in the bacterial flagellum basal body. The chain is Flagellar hook-basal body complex protein FliE from Photorhabdus laumondii subsp. laumondii (strain DSM 15139 / CIP 105565 / TT01) (Photorhabdus luminescens subsp. laumondii).